The primary structure comprises 117 residues: uncharacterized protein (117 aa).

The protein resides in the mitochondrion. This is an uncharacterized protein from Arabidopsis thaliana (Mouse-ear cress).